The primary structure comprises 118 residues: Superoxide-generating NADPH oxidase light chain subunit (118 aa).

The next 4 helical transmembrane spans lie at 9–29 (WAAM…IMGI), 36–56 (IAIY…PLSF), 62–82 (AIFH…VLCY), and 83–103 (FLVP…VFLI).

Belongs to the p22phox family. As to quaternary structure, composed of a heavy chain and a light chain.

It localises to the cell membrane. Its function is as follows. Critical component of the membrane-bound oxidase of phagocytes that generates superoxide. The sequence is that of Superoxide-generating NADPH oxidase light chain subunit (cybA) from Dictyostelium discoideum (Social amoeba).